We begin with the raw amino-acid sequence, 539 residues long: Phenylacetyl-CoA ligase epaB (539 aa).

188–199 (RLFSSGTTGLPK) provides a ligand contact to AMP. The interval 449–525 (EVEGVLRNHP…DAIPRNASGK (77 aa)) is AMP-binding.

The protein belongs to the ATP-dependent AMP-binding enzyme family.

It participates in secondary metabolite biosynthesis. Its function is as follows. Phenylacetyl-CoA ligase; part of the gene cluster that mediates the biosynthesis of nigerpyrone and its derivatives carbonarone A and pestalamide A. The biosynthesis pathway begins with the polyketide assembly by epaA to form phenylacetyl triketide precursor from successive condensation of two malonyl-CoA, presumably with one phenylacetyl-CoA starter unit produced by the phenylacetyl-CoA ligase epaB. For the nigerpyrone biosynthesis, the reactive polyketide chain is released as an aldehyde through the R-domain. A nonenzymatic cyclization and dehydration may create nigerpyrone. For the biosynthesis of carbonarone A and pestalamide A, an extra methyl group is added through the C-methyltransferase domain. Several further steps involving the dehydrogenase orf1, the cytochrome P450 monooxygenase orf2 and the FAD-dependent monooxygenase orf3 are required to form a carbonarone A precursor which is converted to carbonarone A via cyclization. The O-acetyltransferase epaC could catalyze the transfer of 2-methylsuccinyl-CoA, a common intermediate in the ethylmalonyl-CoA pathway, to generate the final product pestalamide A. In Aspergillus niger (strain ATCC MYA-4892 / CBS 513.88 / FGSC A1513), this protein is Phenylacetyl-CoA ligase epaB.